The sequence spans 874 residues: MYQTTAALRSAFLEFFRSNGHQVVDSSSLVPGNDPTLLFTNAGMNQFKDVFLGMDKRSYTRATTAQRCVRAGGKHNDLDNVGYTARHHTFFEMLGNFSFGDYFKEDAIRFGWTFLTEVLKLPKERLCVTVYQTDDEAFEIWNKKIGVAAENIIRIGDNKGAPYASDNFWQMGDTGPCGPCTEIFYDHGDHIWGGRPGSPEEDGDRFIEIWNIVFMQYNRQASGEMLPLPKPSVDTGMGIERIAAIMQGVHSNYEIDIFRALIAKAAEIIGVTDLSNKSLRVIADHIRSCAFLVADGVMPSNEGRGYVLRRIIRRAVRHGNKLGATEAFFYKLVPTLIEVMGDAAKGLADTQVIVEKALKAEEEQFARTLERGLGILDSALNELQGDTLDGETVFKLYDTYGFPVDLTADVCRERNIIVDEAGFEAAMAEQRSRAQAAGNFGADYNAALKIDAETAFCGYSELTGNAKVTALYLNGESVPAINAGDDAVVVLDVTPFYAESGGQVGDKGVLVAQGIEFAVSDTQKFGQASGHKGTLTAGSLSVGQVLEAKVDKKLRHRTQLNHSVTHLLHAALRQVLGTHVTQKGSLVDPERLRFDFSHFEAVKPAELKQVEELVNTQIRRNHELKVAEMAIDEAKEKGAMALFGEKYDAQVRVVTMGDFSIELCGGTHVGRTGDIGLFKITSEGGIAAGVRRIEAVTGAAAMAYVAQQQAQLEEAAALLKGDTQSVVAKLKVQLDKMKQLEKDMQQLKDKLAAAASADLAGDAVVVNGVNVLIKKLEGVEAGALRGLQDELKQKLKSAVILLGVAQEGKVNLIAGVSNDLVGKVKAGELVAMVAAQVGGKGGGRPDMAQAGGSQPENLDAALSQVLPWITERLA.

Residues His562, His566, Cys664, and His668 each coordinate Zn(2+).

This sequence belongs to the class-II aminoacyl-tRNA synthetase family. The cofactor is Zn(2+).

Its subcellular location is the cytoplasm. The enzyme catalyses tRNA(Ala) + L-alanine + ATP = L-alanyl-tRNA(Ala) + AMP + diphosphate. In terms of biological role, catalyzes the attachment of alanine to tRNA(Ala) in a two-step reaction: alanine is first activated by ATP to form Ala-AMP and then transferred to the acceptor end of tRNA(Ala). Also edits incorrectly charged Ser-tRNA(Ala) and Gly-tRNA(Ala) via its editing domain. This chain is Alanine--tRNA ligase, found in Shewanella sp. (strain MR-7).